We begin with the raw amino-acid sequence, 174 residues long: Dual-action ribosomal maturation protein DarP (174 aa).

It belongs to the DarP family.

Its subcellular location is the cytoplasm. Functionally, member of a network of 50S ribosomal subunit biogenesis factors which assembles along the 30S-50S interface, preventing incorrect 23S rRNA structures from forming. Promotes peptidyl transferase center (PTC) maturation. In Pseudomonas paraeruginosa (strain DSM 24068 / PA7) (Pseudomonas aeruginosa (strain PA7)), this protein is Dual-action ribosomal maturation protein DarP.